The chain runs to 179 residues: ATP-dependent protease subunit HslV (179 aa).

Residue Thr-7 is part of the active site. Na(+) is bound by residues Gly-162, Cys-165, and Thr-168.

It belongs to the peptidase T1B family. HslV subfamily. In terms of assembly, a double ring-shaped homohexamer of HslV is capped on each side by a ring-shaped HslU homohexamer. The assembly of the HslU/HslV complex is dependent on binding of ATP.

It is found in the cytoplasm. It carries out the reaction ATP-dependent cleavage of peptide bonds with broad specificity.. Allosterically activated by HslU binding. Its function is as follows. Protease subunit of a proteasome-like degradation complex believed to be a general protein degrading machinery. This is ATP-dependent protease subunit HslV from Bordetella pertussis (strain Tohama I / ATCC BAA-589 / NCTC 13251).